A 174-amino-acid chain; its full sequence is Crossover junction endodeoxyribonuclease RuvC (174 aa).

Residues aspartate 8, glutamate 67, and aspartate 139 contribute to the active site. Residues aspartate 8, glutamate 67, and aspartate 139 each contribute to the Mg(2+) site.

It belongs to the RuvC family. As to quaternary structure, homodimer which binds Holliday junction (HJ) DNA. The HJ becomes 2-fold symmetrical on binding to RuvC with unstacked arms; it has a different conformation from HJ DNA in complex with RuvA. In the full resolvosome a probable DNA-RuvA(4)-RuvB(12)-RuvC(2) complex forms which resolves the HJ. Mg(2+) is required as a cofactor.

The protein localises to the cytoplasm. The enzyme catalyses Endonucleolytic cleavage at a junction such as a reciprocal single-stranded crossover between two homologous DNA duplexes (Holliday junction).. The RuvA-RuvB-RuvC complex processes Holliday junction (HJ) DNA during genetic recombination and DNA repair. Endonuclease that resolves HJ intermediates. Cleaves cruciform DNA by making single-stranded nicks across the HJ at symmetrical positions within the homologous arms, yielding a 5'-phosphate and a 3'-hydroxyl group; requires a central core of homology in the junction. The consensus cleavage sequence is 5'-(A/T)TT(C/G)-3'. Cleavage occurs on the 3'-side of the TT dinucleotide at the point of strand exchange. HJ branch migration catalyzed by RuvA-RuvB allows RuvC to scan DNA until it finds its consensus sequence, where it cleaves and resolves the cruciform DNA. The protein is Crossover junction endodeoxyribonuclease RuvC of Pseudomonas fluorescens (strain SBW25).